A 734-amino-acid polypeptide reads, in one-letter code: Photosystem I P700 chlorophyll a apoprotein A2 (734 aa).

Transmembrane regions (helical) follow at residues 46–69 (IFAS…FHVA), 135–158 (LYTG…LHLQ), 175–199 (LNHH…HVAI), 273–291 (IAHH…GHMY), 330–353 (IHFQ…QHMY), 369–395 (AALY…IFFI), 417–439 (AIKS…LYVH), and 517–535 (FLVH…LILV). Residues Cys559 and Cys568 each coordinate [4Fe-4S] cluster. A run of 2 helical transmembrane segments spans residues 575 to 596 (AFYL…YWHW) and 643 to 665 (LSVW…MFLI). The chlorophyll a site is built by His654, Met662, and Tyr670. Trp671 serves as a coordination point for phylloquinone. The chain crosses the membrane as a helical span at residues 707–727 (LVGLAHFSVGYIFTYAAFLIA).

Belongs to the PsaA/PsaB family. As to quaternary structure, the PsaA/B heterodimer binds the P700 chlorophyll special pair and subsequent electron acceptors. PSI consists of a core antenna complex that captures photons, and an electron transfer chain that converts photonic excitation into a charge separation. The eukaryotic PSI reaction center is composed of at least 11 subunits. It depends on P700 is a chlorophyll a/chlorophyll a' dimer, A0 is one or more chlorophyll a, A1 is one or both phylloquinones and FX is a shared 4Fe-4S iron-sulfur center. as a cofactor.

The protein localises to the plastid. The protein resides in the chloroplast thylakoid membrane. The enzyme catalyses reduced [plastocyanin] + hnu + oxidized [2Fe-2S]-[ferredoxin] = oxidized [plastocyanin] + reduced [2Fe-2S]-[ferredoxin]. Its function is as follows. PsaA and PsaB bind P700, the primary electron donor of photosystem I (PSI), as well as the electron acceptors A0, A1 and FX. PSI is a plastocyanin-ferredoxin oxidoreductase, converting photonic excitation into a charge separation, which transfers an electron from the donor P700 chlorophyll pair to the spectroscopically characterized acceptors A0, A1, FX, FA and FB in turn. Oxidized P700 is reduced on the lumenal side of the thylakoid membrane by plastocyanin. The polypeptide is Photosystem I P700 chlorophyll a apoprotein A2 (Drimys granadensis).